The following is a 354-amino-acid chain: Uroporphyrinogen decarboxylase (354 aa).

Substrate-binding positions include Arg-27–Arg-31, Phe-46, Asp-77, Tyr-154, Thr-209, and His-327.

This sequence belongs to the uroporphyrinogen decarboxylase family. In terms of assembly, homodimer.

It is found in the cytoplasm. The catalysed reaction is uroporphyrinogen III + 4 H(+) = coproporphyrinogen III + 4 CO2. Its pathway is porphyrin-containing compound metabolism; protoporphyrin-IX biosynthesis; coproporphyrinogen-III from 5-aminolevulinate: step 4/4. Catalyzes the decarboxylation of four acetate groups of uroporphyrinogen-III to yield coproporphyrinogen-III. The polypeptide is Uroporphyrinogen decarboxylase (Salmonella typhimurium (strain LT2 / SGSC1412 / ATCC 700720)).